A 125-amino-acid chain; its full sequence is Monothiol glutaredoxin-S2 (125 aa).

Positions 28–124 (AERVGRLVRE…PRLREVGALC (97 aa)) constitute a Glutaredoxin domain. Cys-48 provides a ligand contact to [2Fe-2S] cluster.

The protein belongs to the glutaredoxin family. CC-type subfamily.

Its subcellular location is the cytoplasm. Its function is as follows. May only reduce GSH-thiol disulfides, but not protein disulfides. The protein is Monothiol glutaredoxin-S2 (GRXS2) of Oryza sativa subsp. japonica (Rice).